The chain runs to 516 residues: Flavin-dependent halogenase armH2 (516 aa).

Residues glycine 16, alanine 19, and glutamate 49 each contribute to the FAD site. Chloride is bound by residues serine 328 and glycine 329. Isoleucine 330 is an FAD binding site. The disordered stretch occupies residues 440–475; that stretch reads PQANGNGAAKQDAVPAPIPVALSSGAGPEKDAKRRE.

Belongs to the flavin-dependent halogenase family.

It catalyses the reaction melleolide F + FADH2 + chloride + O2 = 6'-chloromelleolide F + FAD + 2 H2O + H(+). Its function is as follows. Flavin-dependent halogenase involved in the biosynthesis of melleolides, a range of antifungal and phytotoxic polyketide derivatives composed of an orsellinic acid (OA) moiety esterified to various sesquiterpene alcohols. The halogenase catalyzes the transfer of a single chlorine atom to the melleolide backbone, resulting in a 6'-chloromelleolide product. The enzyme acts on free substrate and does not depend on carrier-protein-dependent acceptor molecules. The sequence is that of Flavin-dependent halogenase armH2 from Armillaria mellea (Honey mushroom).